The primary structure comprises 151 residues: UPF0756 membrane protein Hore_21770 (151 aa).

5 consecutive transmembrane segments (helical) span residues 7 to 29, 49 to 69, 84 to 104, 110 to 130, and 131 to 151; these read LLII…GLLL, IEIG…LSPV, TVAI…LDLL, FILG…GIPV, and GPLM…IIKG.

This sequence belongs to the UPF0756 family.

It localises to the cell membrane. This Halothermothrix orenii (strain H 168 / OCM 544 / DSM 9562) protein is UPF0756 membrane protein Hore_21770.